A 100-amino-acid chain; its full sequence is MITKEEAQKIAKLARLKFEEDTVEKFSAQLSTIMNMIDILNEIDCKDIEPLTSVSNMNVRMREDVVTSSDLSNKLFDNVSGNSAQLAKEVKYFITPKVIE.

It belongs to the GatC family. Heterotrimer of A, B and C subunits.

The enzyme catalyses L-glutamyl-tRNA(Gln) + L-glutamine + ATP + H2O = L-glutaminyl-tRNA(Gln) + L-glutamate + ADP + phosphate + H(+). The catalysed reaction is L-aspartyl-tRNA(Asn) + L-glutamine + ATP + H2O = L-asparaginyl-tRNA(Asn) + L-glutamate + ADP + phosphate + 2 H(+). In terms of biological role, allows the formation of correctly charged Asn-tRNA(Asn) or Gln-tRNA(Gln) through the transamidation of misacylated Asp-tRNA(Asn) or Glu-tRNA(Gln) in organisms which lack either or both of asparaginyl-tRNA or glutaminyl-tRNA synthetases. The reaction takes place in the presence of glutamine and ATP through an activated phospho-Asp-tRNA(Asn) or phospho-Glu-tRNA(Gln). The polypeptide is Aspartyl/glutamyl-tRNA(Asn/Gln) amidotransferase subunit C (Rickettsia felis (strain ATCC VR-1525 / URRWXCal2) (Rickettsia azadi)).